Consider the following 289-residue polypeptide: Acetyl-coenzyme A carboxylase carboxyl transferase subunit beta (289 aa).

In terms of domain architecture, CoA carboxyltransferase N-terminal spans 28–289 (VMTKCPKCKK…QGGEMAVWQS (262 aa)). Positions 32, 35, 51, and 54 each coordinate Zn(2+). The C4-type zinc-finger motif lies at 32-54 (CPKCKKIMYTKELLKNLKVCVNC).

It belongs to the AccD/PCCB family. Acetyl-CoA carboxylase is a heterohexamer composed of biotin carboxyl carrier protein (AccB), biotin carboxylase (AccC) and two subunits each of ACCase subunit alpha (AccA) and ACCase subunit beta (AccD). The cofactor is Zn(2+).

The protein localises to the cytoplasm. It catalyses the reaction N(6)-carboxybiotinyl-L-lysyl-[protein] + acetyl-CoA = N(6)-biotinyl-L-lysyl-[protein] + malonyl-CoA. Its pathway is lipid metabolism; malonyl-CoA biosynthesis; malonyl-CoA from acetyl-CoA: step 1/1. Component of the acetyl coenzyme A carboxylase (ACC) complex. Biotin carboxylase (BC) catalyzes the carboxylation of biotin on its carrier protein (BCCP) and then the CO(2) group is transferred by the transcarboxylase to acetyl-CoA to form malonyl-CoA. The chain is Acetyl-coenzyme A carboxylase carboxyl transferase subunit beta from Bacillus cereus (strain ATCC 10987 / NRS 248).